Consider the following 407-residue polypeptide: Imidazolonepropionase (407 aa).

Fe(3+) contacts are provided by His-68 and His-70. His-68 and His-70 together coordinate Zn(2+). The 4-imidazolone-5-propanoate site is built by Arg-77, Tyr-140, and His-173. Tyr-140 contacts N-formimidoyl-L-glutamate. His-238 serves as a coordination point for Fe(3+). A Zn(2+)-binding site is contributed by His-238. Gln-241 contributes to the 4-imidazolone-5-propanoate binding site. Asp-313 lines the Fe(3+) pocket. Position 313 (Asp-313) interacts with Zn(2+). N-formimidoyl-L-glutamate contacts are provided by Asn-315 and Gly-317. Residue Thr-318 coordinates 4-imidazolone-5-propanoate.

It belongs to the metallo-dependent hydrolases superfamily. HutI family. The cofactor is Zn(2+). Fe(3+) serves as cofactor.

The protein localises to the cytoplasm. It catalyses the reaction 4-imidazolone-5-propanoate + H2O = N-formimidoyl-L-glutamate. Its pathway is amino-acid degradation; L-histidine degradation into L-glutamate; N-formimidoyl-L-glutamate from L-histidine: step 3/3. Its function is as follows. Catalyzes the hydrolytic cleavage of the carbon-nitrogen bond in imidazolone-5-propanoate to yield N-formimidoyl-L-glutamate. It is the third step in the universal histidine degradation pathway. The protein is Imidazolonepropionase of Burkholderia pseudomallei (strain 668).